Consider the following 211-residue polypeptide: ATP phosphoribosyltransferase (211 aa).

This sequence belongs to the ATP phosphoribosyltransferase family. Short subfamily. Heteromultimer composed of HisG and HisZ subunits.

It localises to the cytoplasm. It catalyses the reaction 1-(5-phospho-beta-D-ribosyl)-ATP + diphosphate = 5-phospho-alpha-D-ribose 1-diphosphate + ATP. The protein operates within amino-acid biosynthesis; L-histidine biosynthesis; L-histidine from 5-phospho-alpha-D-ribose 1-diphosphate: step 1/9. Its function is as follows. Catalyzes the condensation of ATP and 5-phosphoribose 1-diphosphate to form N'-(5'-phosphoribosyl)-ATP (PR-ATP). Has a crucial role in the pathway because the rate of histidine biosynthesis seems to be controlled primarily by regulation of HisG enzymatic activity. The chain is ATP phosphoribosyltransferase from Pseudomonas entomophila (strain L48).